Consider the following 155-residue polypeptide: Large-conductance mechanosensitive channel (155 aa).

2 consecutive transmembrane segments (helical) span residues 25–45 (VLDL…VTSL) and 98–118 (GDFI…FLIV).

Belongs to the MscL family. In terms of assembly, homopentamer.

Its subcellular location is the cell inner membrane. Functionally, channel that opens in response to stretch forces in the membrane lipid bilayer. May participate in the regulation of osmotic pressure changes within the cell. In Novosphingobium aromaticivorans (strain ATCC 700278 / DSM 12444 / CCUG 56034 / CIP 105152 / NBRC 16084 / F199), this protein is Large-conductance mechanosensitive channel.